Reading from the N-terminus, the 1278-residue chain is ABC transporter B family member 11 (1278 aa).

Composition is skewed to basic and acidic residues over residues 1 to 13 (MNGD…DSVS) and 21 to 35 (SPKE…EKSE). The disordered stretch occupies residues 1–35 (MNGDGAREGDSVSHEPSTSKSPKEGEETKKEEKSE). Helical transmembrane passes span 55-75 (VLLM…LPFM), 106-126 (FVYL…CWMI), 182-202 (FIQL…KGWL), 205-225 (LVML…ALIV), 285-305 (GLGL…AIWF), and 314-334 (GYTG…SMSL). Residues 58–346 (MICGSIGAIG…TSPCVTAFAA (289 aa)) form the ABC transmembrane type-1 1 domain. Residues 381-617 (IELKDVHFSY…SEGAYSQLIR (237 aa)) form the ABC transporter 1 domain. An ATP-binding site is contributed by 416-423 (GESGSGKS). Residues N483, N568, and N653 are each glycosylated (N-linked (GlcNAc...) asparagine). Positions 629 to 654 (ELSSGSSFRNSNLKKSMEGTSSVGNS) are enriched in polar residues. Residues 629 to 656 (ELSSGSSFRNSNLKKSMEGTSSVGNSSR) are disordered. Residues 710–997 (LLLGTVAAAI…SSTFAPDSSK (288 aa)) form the ABC transmembrane type-1 2 domain. A run of 2 helical transmembrane segments spans residues 711–731 (LLGT…GILI) and 751–771 (FWAI…PTQM). N806 carries N-linked (GlcNAc...) asparagine glycosylation. 4 consecutive transmembrane segments (helical) span residues 824-844 (ALVG…ASGL), 845-865 (IIAF…LPLI), 932-952 (GFIS…VYAT), and 971-991 (VFQV…SSTF). Residues 1032–1271 (IELRHLSFTY…EGGVYASLVQ (240 aa)) enclose the ABC transporter 2 domain. Residue 1067–1074 (GESGSGKS) coordinates ATP. Residues N1121 and N1222 are each glycosylated (N-linked (GlcNAc...) asparagine).

Belongs to the ABC transporter superfamily. ABCB family. Multidrug resistance exporter (TC 3.A.1.201) subfamily. As to expression, present in roots and flower buds.

Its subcellular location is the membrane. The enzyme catalyses (indol-3-yl)acetate(in) + ATP + H2O = (indol-3-yl)acetate(out) + ADP + phosphate + H(+). Functionally, involved in the regulation of auxin transport required for pistil elongation. The protein is ABC transporter B family member 11 of Arabidopsis thaliana (Mouse-ear cress).